Reading from the N-terminus, the 109-residue chain is Globin (109 aa).

Residues 3-109 enclose the Globin domain; that stretch reads PLTAAEVSSL…IFPIAGIHAL (107 aa).

This sequence belongs to the globin family. As to quaternary structure, monomer.

Functionally, oxygen binding protein. This Dicrocoelium dendriticum (Small liver fluke) protein is Globin.